A 504-amino-acid polypeptide reads, in one-letter code: Pre-mRNA-processing factor 19 (504 aa).

Ser-2 bears the N-acetylserine mark. The region spanning 2–73 (SLICSISNEV…KPPSATSIPA (72 aa)) is the U-box domain. The segment at 68–223 (ATSIPAILKA…VGLHSASIPG (156 aa)) is may mediate interaction with PSMC5. N6-acetyllysine occurs at positions 122, 179, 244, and 261. The stretch at 219–259 (ASIPGILALDLCPSDTNKILTGGADKNVVVFDKSTEQILAT) is one WD 1 repeat. WD repeat units lie at residues 262–301 (GHTKKVTSVVFHPSQELVFSASPDATIRIWSVPNTSCVQV), 304–345 (AHES…TKVT), 348–387 (TSGCSLTCAQFHPDGLIFGTGTMDSQIKIWDLKERTNVAN), 390–429 (GHSGPITSIAFSENGYYLATAADDSSVKLWDLRKLKNFKT), 433–472 (DNNFEVKSLIFDQSGTYLALGGTDVQIYICKQWTEILHFT), and 473–503 (EHSGLTTGVAFGHHAKFIASTGMDRSLKFYS).

Belongs to the WD repeat PRP19 family. Homotetramer. Component of activated, catalytic and post-catalytic spliceosomes. Component of the Prp19 complex/PRP19C/Nineteen complex/NTC and related complexes described as PRP19-CDC5L splicing complex and PSO4 complex. A homotetramer of PRPF19, CDC5L, PLRG1 and BCAS2 constitute the core of those complexes. The interaction with CDC5L, PLRG1 and BCAS2 is direct within this core complex. At least three less stably associated proteins CTNNBL1, CWC15 and HSPA8 are found in the Prp19 complex. The Prp19 complex associates with the spliceosome during its assembly and remodeling recruiting additional proteins. Component of the XAB2 complex, a multimeric protein complex composed of XAB2, PRPF19, AQR, ZNF830, ISY1, and PPIE. Interacts with CWC22 and EIF4A3 in an RNA-independent manner. Interacts with RPA1 and RPA2; the PRP19-CDC5L complex is recruited to the sites of DNA repair where it interacts with the replication protein A complex (RPA). Interacts with SETMAR; required for SETMAR recruitment to site of DNA damage. Interacts with U2AF2; the interaction is direct and recruits the Prp19 complex to RNA polymerase II C-terminal domain (CTD) and the pre-mRNA. Interacts with PRPF3. Interacts with APEX1, DNTT and PSMB4. Interacts with KNSTRN. Interacts with PSMC5. Isoform 2 (via N-terminus) interacts with PPIA. Isoform 2 does not interact with CDC5L. Interacts with KHDC4. Interacts with USB1. Interacts with DDX41. In terms of tissue distribution, expressed in white and brown adipose tissues, brain and to a lower extent in liver, kidney, muscle, lung and spleen (at protein level).

The protein resides in the nucleus. The protein localises to the nucleoplasm. It is found in the cytoplasm. Its subcellular location is the cytoskeleton. It localises to the spindle. The protein resides in the lipid droplet. It carries out the reaction S-ubiquitinyl-[E2 ubiquitin-conjugating enzyme]-L-cysteine + [acceptor protein]-L-lysine = [E2 ubiquitin-conjugating enzyme]-L-cysteine + N(6)-ubiquitinyl-[acceptor protein]-L-lysine.. It participates in protein modification; protein ubiquitination. Its function is as follows. Ubiquitin-protein ligase which is a core component of several complexes mainly involved in pre-mRNA splicing and DNA repair. Required for pre-mRNA splicing as component of the spliceosome. Core component of the PRP19C/Prp19 complex/NTC/Nineteen complex which is part of the spliceosome and participates in its assembly, its remodeling and is required for its activity. During assembly of the spliceosome, mediates 'Lys-63'-linked polyubiquitination of the U4 spliceosomal protein PRPF3. Ubiquitination of PRPF3 allows its recognition by the U5 component PRPF8 and stabilizes the U4/U5/U6 tri-snRNP spliceosomal complex. Recruited to RNA polymerase II C-terminal domain (CTD) and the pre-mRNA, it may also couple the transcriptional and spliceosomal machineries. The XAB2 complex, which contains PRPF19, is also involved in pre-mRNA splicing, transcription and transcription-coupled repair. Beside its role in pre-mRNA splicing PRPF19, as part of the PRP19-CDC5L complex, plays a role in the DNA damage response/DDR. It is recruited to the sites of DNA damage by the RPA complex where PRPF19 directly ubiquitinates RPA1 and RPA2. 'Lys-63'-linked polyubiquitination of the RPA complex allows the recruitment of the ATR-ATRIP complex and the activation of ATR, a master regulator of the DNA damage response. May also play a role in DNA double-strand break (DSB) repair by recruiting the repair factor SETMAR to altered DNA. As part of the PSO4 complex may also be involved in the DNA interstrand cross-links/ICLs repair process. In addition, may also mediate 'Lys-48'-linked polyubiquitination of substrates and play a role in proteasomal degradation. May play a role in the biogenesis of lipid droplets. May play a role in neural differentiation possibly through its function as part of the spliceosome. Forced expression leads to suppression of neuronal differentiation, and on the contrary to stimulation of astroglial cell differentiation in retinoic acid-primed P19 cells. The sequence is that of Pre-mRNA-processing factor 19 from Mus musculus (Mouse).